Reading from the N-terminus, the 1040-residue chain is DNA mismatch repair protein MutS (1040 aa).

The segment covering 1-10 (MPVKPSAQNN) has biased composition (polar residues). Disordered stretches follow at residues 1–22 (MPVKPSAQNNSPSKPTSKSVPV) and 130–157 (ATGTDNANNPSNAPTMGDKQKKDKSKST). The span at 11-22 (SPSKPTSKSVPV) shows a compositional bias: low complexity. Positions 130-143 (ATGTDNANNPSNAP) are enriched in polar residues. An ATP-binding site is contributed by 759–766 (GPNMGGKS).

Belongs to the DNA mismatch repair MutS family.

This protein is involved in the repair of mismatches in DNA. It is possible that it carries out the mismatch recognition step. This protein has a weak ATPase activity. This is DNA mismatch repair protein MutS from Psychrobacter cryohalolentis (strain ATCC BAA-1226 / DSM 17306 / VKM B-2378 / K5).